Reading from the N-terminus, the 243-residue chain is Terpene cyclase dpmaB (243 aa).

A run of 6 helical transmembrane segments spans residues 11-31 (PGYLEVAWIADTCKLLMGLGW), 51-71 (ALMPLCCNFAWELTYAVIYPF), 112-132 (LPFIFIICIAAWTTAHLALAL), 141-161 (AFSAYGCQLLLSVGALCQLLS), 169-189 (SYFLWFCRFFGSLVLIPQDVL), and 207-227 (IWFVSIFLLLDGSYALCLWYV).

It belongs to the paxB family.

The protein localises to the membrane. Its pathway is secondary metabolite biosynthesis; terpenoid biosynthesis. Terpene cyclase; part of the gene cluster that mediates the biosynthesis of the diterpenoid pyrones subglutinols A and B. The first step of the pathway is the synthesis of the alpha-pyrone moiety by the polyketide synthase dpmaA via condensation of one acetyl-CoA starter unit with 3 malonyl-CoA units and 2 methylations. The alpha-pyrone is then combined with geranylgeranyl pyrophosphate (GGPP) formed by the GGPP synthase dpmaD through the action of the prenyltransferase dpmaC to yield a linear alpha-pyrone diterpenoid. Subsequent steps in the diterpenoid pyrone biosynthetic pathway involve the decalin core formation, which is initiated by the epoxidation of the C10-C11 olefin by the FAD-dependent oxidoreductase dpmaE, and is followed by a cyclization cascade catalyzed by the terpene cyclase dpmaB. The dehydrogenase dpmaF is then involved in tetrahydrofuran (THF) ring formation at the C5 unit to complete the formation of subglutinols A and B. The chain is Terpene cyclase dpmaB from Metarhizium anisopliae (Entomophthora anisopliae).